The sequence spans 542 residues: Chaperonin GroEL 2 (542 aa).

Residues 30 to 33 (TLGP), lysine 51, 87 to 91 (DGTTT), glycine 415, and aspartate 494 each bind ATP.

Belongs to the chaperonin (HSP60) family. As to quaternary structure, forms a cylinder of 14 subunits composed of two heptameric rings stacked back-to-back. Interacts with the co-chaperonin GroES.

It localises to the cytoplasm. The catalysed reaction is ATP + H2O + a folded polypeptide = ADP + phosphate + an unfolded polypeptide.. In terms of biological role, together with its co-chaperonin GroES, plays an essential role in assisting protein folding. The GroEL-GroES system forms a nano-cage that allows encapsulation of the non-native substrate proteins and provides a physical environment optimized to promote and accelerate protein folding. In Syntrophobacter fumaroxidans (strain DSM 10017 / MPOB), this protein is Chaperonin GroEL 2.